The following is a 140-amino-acid chain: Large ribosomal subunit protein uL11 (140 aa).

It belongs to the universal ribosomal protein uL11 family. In terms of assembly, part of the ribosomal stalk of the 50S ribosomal subunit. Interacts with L10 and the large rRNA to form the base of the stalk. L10 forms an elongated spine to which L12 dimers bind in a sequential fashion forming a multimeric L10(L12)X complex. Post-translationally, one or more lysine residues are methylated.

Functionally, forms part of the ribosomal stalk which helps the ribosome interact with GTP-bound translation factors. In Enterococcus faecalis (strain ATCC 700802 / V583), this protein is Large ribosomal subunit protein uL11.